The sequence spans 341 residues: Uroporphyrinogen decarboxylase (341 aa).

Substrate contacts are provided by residues 26 to 30 (RQAGR), Asp75, Tyr150, Ser205, and His318.

Belongs to the uroporphyrinogen decarboxylase family. In terms of assembly, homodimer.

The protein resides in the cytoplasm. The enzyme catalyses uroporphyrinogen III + 4 H(+) = coproporphyrinogen III + 4 CO2. Its pathway is porphyrin-containing compound metabolism; protoporphyrin-IX biosynthesis; coproporphyrinogen-III from 5-aminolevulinate: step 4/4. Catalyzes the decarboxylation of four acetate groups of uroporphyrinogen-III to yield coproporphyrinogen-III. In Thermus thermophilus (strain ATCC 27634 / DSM 579 / HB8), this protein is Uroporphyrinogen decarboxylase.